The following is a 103-amino-acid chain: MPGVIFWTIFIIQFMIWVFLSTTKIGRVIAFIWGTMPFLALYLKYTGYFPTIFENPDVNLFANLLSNFVVEWSYLVVQTTVPSWIGLLFGLKLSGNNDTPQII.

Helical transmembrane passes span 1-21 (MPGV…VFLS), 29-49 (IAFI…TGYF), and 69-89 (VVEW…GLLF).

The protein resides in the cell membrane. This is an uncharacterized protein from Methanocaldococcus jannaschii (strain ATCC 43067 / DSM 2661 / JAL-1 / JCM 10045 / NBRC 100440) (Methanococcus jannaschii).